The sequence spans 319 residues: Zinc finger protein-like 1 homolog (319 aa).

The B box-type; degenerate zinc-finger motif lies at 1–43; it reads MGLCKCPKRKVTNLFCYEHRVNVCEFCLVDNHPNCVVQSYLNW. The RING-type; atypical zinc-finger motif lies at 53–101; that stretch reads CSLCHTTLTQGETIRLNCLHLLHWRCFDDWAASFPPTTAPAGYRCPCCS. A disordered region spans residues 212–232; it reads ESSSDTRPLLRQDRDADNEEN. Residues 219-232 are compositionally biased toward basic and acidic residues; it reads PLLRQDRDADNEEN. The helical transmembrane segment at 264 to 284 threads the bilayer; that stretch reads KMAIFVMFLALLALITIITVL.

This sequence belongs to the ZFPL1 family.

The protein localises to the membrane. The sequence is that of Zinc finger protein-like 1 homolog from Caenorhabditis briggsae.